The following is a 38-amino-acid chain: Large ribosomal subunit protein bL36 (38 aa).

The protein belongs to the bacterial ribosomal protein bL36 family.

This is Large ribosomal subunit protein bL36 from Thermotoga maritima (strain ATCC 43589 / DSM 3109 / JCM 10099 / NBRC 100826 / MSB8).